The chain runs to 325 residues: Quinolinate synthase (325 aa).

Positions 41 and 58 each coordinate iminosuccinate. Cys-103 lines the [4Fe-4S] cluster pocket. Iminosuccinate is bound by residues 129–131 (YIN) and Ser-146. Position 189 (Cys-189) interacts with [4Fe-4S] cluster. Residues 215–217 (HPE) and Thr-232 contribute to the iminosuccinate site. Cys-282 lines the [4Fe-4S] cluster pocket.

It belongs to the quinolinate synthase family. Type 2 subfamily. The cofactor is [4Fe-4S] cluster.

The protein resides in the cytoplasm. It carries out the reaction iminosuccinate + dihydroxyacetone phosphate = quinolinate + phosphate + 2 H2O + H(+). It participates in cofactor biosynthesis; NAD(+) biosynthesis; quinolinate from iminoaspartate: step 1/1. Its function is as follows. Catalyzes the condensation of iminoaspartate with dihydroxyacetone phosphate to form quinolinate. This Rippkaea orientalis (strain PCC 8801 / RF-1) (Cyanothece sp. (strain PCC 8801)) protein is Quinolinate synthase.